A 670-amino-acid polypeptide reads, in one-letter code: DNA ligase (670 aa).

Residues 32-36 (DAEYD), 81-82 (SL), and glutamate 111 each bind NAD(+). The active-site N6-AMP-lysine intermediate is the lysine 113. NAD(+) is bound by residues arginine 134, glutamate 171, lysine 290, and lysine 314. Residues cysteine 408, cysteine 411, cysteine 426, and cysteine 432 each contribute to the Zn(2+) site. The BRCT domain occupies 591–670 (EEALSLKGQT…DGLLAVLAGE (80 aa)).

The protein belongs to the NAD-dependent DNA ligase family. LigA subfamily. Mg(2+) is required as a cofactor. The cofactor is Mn(2+).

It carries out the reaction NAD(+) + (deoxyribonucleotide)n-3'-hydroxyl + 5'-phospho-(deoxyribonucleotide)m = (deoxyribonucleotide)n+m + AMP + beta-nicotinamide D-nucleotide.. Its function is as follows. DNA ligase that catalyzes the formation of phosphodiester linkages between 5'-phosphoryl and 3'-hydroxyl groups in double-stranded DNA using NAD as a coenzyme and as the energy source for the reaction. It is essential for DNA replication and repair of damaged DNA. This chain is DNA ligase, found in Shewanella sediminis (strain HAW-EB3).